The following is a 318-amino-acid chain: NADH-ubiquinone oxidoreductase chain 1 (318 aa).

8 helical membrane passes run 3–23 (TTNI…LTLV), 69–89 (FMFT…WIPL), 100–120 (LGIL…LWSG), 135–155 (AVAQ…SLVL), 171–191 (HMWL…STLA), 213–233 (VEYA…NIIL), 253–273 (ELHT…FLWI), and 294–314 (LPLT…FASI).

The protein belongs to the complex I subunit 1 family.

It is found in the mitochondrion inner membrane. The catalysed reaction is a ubiquinone + NADH + 5 H(+)(in) = a ubiquinol + NAD(+) + 4 H(+)(out). In terms of biological role, core subunit of the mitochondrial membrane respiratory chain NADH dehydrogenase (Complex I) that is believed to belong to the minimal assembly required for catalysis. Complex I functions in the transfer of electrons from NADH to the respiratory chain. The immediate electron acceptor for the enzyme is believed to be ubiquinone. The protein is NADH-ubiquinone oxidoreductase chain 1 (MT-ND1) of Choloepus didactylus (Southern two-toed sloth).